The chain runs to 1363 residues: MFLILLISLPMALAVIGDLKCTTVSINDVDTGVPSISTDTVDVTNGLGTYYVLDRVYLNTTLLLNGYYPTSGSTYRNMALKGTLLLSTLWFKPPFLSDFINGIFAKVKNTKVIKHGVMYSEFPAITIGSTFVNTSYSVVVQPHTTNLDNKLQGLLEISVCQYTMCEYPNTICHPNLGNRRVELWHWDTGVVSCLYKRNFTYDVNADYLYFHFYQEGGTFYAYFTDTGVVTKFLFNVYLGTVLSHYYVMPLTCNSAMTLEYWVTPLTSKQYLLAFNQDGVIFNAVDCKSDFMSEIKCKTLSIAPSTGVYELNGYTVQPIADVYRRIPNLPDCNIEAWLNDKSVPSPLNWERKTFSNCNFNMSSLMSFIQADSFTCNNIDAAKIYGMCFSSITIDKFAIPNGRKVDLQLGNLGYLQSFNYRIDTTATSCQLYYNLPAANVSLSRFNPSIWNRRFGFTEQSVFKPQPVGVFTDHDVVYAQHCFKAPTNFCPCKLDGSLCVGNGPGIDAGYKNSGIGTCPAGTNYLTCHNAAQCNCLCTPDPITSKSTGPYKCPQTKYLVGIGEHCSGLAIKSDYCGGNPCTCQPQAFLGWSVDSCLQGDRCNIFANFILHDVNSGTTCSTDLQKSNTDIILGVCVNYDLYGITGQGIFVEANATYYNSWQNLLYDSNGNLYGFRDYLTNRTFMIRSCYSGRVSAAFHANSSEPALLFRNIKCNYVFNNTLSRQLQPINYFDSYLGCVVNADNSTASAVQTCDLTVGSGYCVDYSTKRRSVRAITTGYRFTNFEPFTVNSVNDSLEPVGGLYEIQIPSEFTIGNMEEFIQTSSPKVTIDCSAFVCGDCAACKSQLVEYGSFCDNINAILTEVNELLDTTQLQVANSLMNGVTLSTKLKDGVNFNVDDINFSPVLGCLGSECNKVSSRSAIEDLLFSKVKLSDVGFVEAYNNCTGGAEIRDLICVQSYNGIKVLPPLLSENQISGYTLAATSASLFPPWSAAAGVPFYLNVQYRINGIGVTMDVLSQNQKLIANAFNNALDAIQEGFDATNSALVKIQAVVNANAEALNNLLQQLSNRFGAISSSLQEILSRLDALEAQRQIDRLINGRFTALNAYVSQQLSDSTLVKFSAAQAMEKVNECVKSQSSRINFCGNGNHIISLVQNAPYGLYFIHFSYVPTKYVTAKVSPGLCIAGDRGIAPKSGYFVNVNNTWMFTGSGYYYPEPITGNNVVVMSTCAVNYTKAPDVMLNISTPNLPDFKEELDQWFKNQTSVAPDLSLDYINVTFLDLQDEMNRLQEAIKLLNQSYINLKDIGTYEYYVKWPWYVWLLIGFAGVAMLVLLFFICCCTGCGTSCFKKCGGCCDDYTGHQELVIKTSHDD.

An N-terminal signal peptide occupies residues 1 to 13 (MFLILLISLPMAL). Topologically, residues 14–1307 (AVIGDLKCTT…GTYEYYVKWP (1294 aa)) are extracellular. Residues 15-298 (VIGDLKCTTV…DFMSEIKCKT (284 aa)) form the BetaCoV S1-NTD domain. 5 cysteine pairs are disulfide-bonded: Cys21–Cys165, Cys160–Cys193, Cys172–Cys252, Cys286–Cys296, and Cys331–Cys356. N-linked (GlcNAc...) asparagine; by host glycosylation is found at Asn59 and Asn133. Asn198 is a glycosylation site (N-linked (GlcNAc...) asparagine; by host). In terms of domain architecture, BetaCoV S1-CTD spans 329-617 (PDCNIEAWLN…DVNSGTTCST (289 aa)). An N-linked (GlcNAc...) asparagine; by host glycan is attached at Asn359. Intrachain disulfides connect Cys374-Cys427 and Cys386-Cys615. N-linked (GlcNAc...) asparagine; by host glycosylation is found at Asn437, Asn649, Asn676, Asn696, Asn714, Asn739, and Asn788. Fusion peptide regions lie at residues 914-935 (SAIE…VEAY) and 933-953 (EAYN…VQSY). Asn937 is a glycosylation site (N-linked (GlcNAc...) asparagine; by host). A disulfide bridge links Cys938 with Cys949. Residues 1014–1064 (QKLIANAFNNALDAIQEGFDATNSALVKIQAVVNANAEALNNLLQQLSNRF) are heptad repeat 1. The stretch at 1043-1087 (QAVVNANAEALNNLLQQLSNRFGAISSSLQEILSRLDALEAQRQI) forms a coiled coil. N-linked (GlcNAc...) asparagine; by host glycosylation is found at Asn1194, Asn1224, Asn1234, Asn1253, Asn1267, and Asn1288. Residues 1258–1296 (APDLSLDYINVTFLDLQDEMNRLQEAIKLLNQSYINLKD) are heptad repeat 2. Residues 1269–1297 (TFLDLQDEMNRLQEAIKLLNQSYINLKDI) are a coiled coil. A helical transmembrane segment spans residues 1308 to 1328 (WYVWLLIGFAGVAMLVLLFFI). The Cytoplasmic segment spans residues 1329 to 1363 (CCCTGCGTSCFKKCGGCCDDYTGHQELVIKTSHDD). The KxHxx signature appears at 1359–1363 (TSHDD).

It belongs to the betacoronaviruses spike protein family. As to quaternary structure, homotrimer; each monomer consists of a S1 and a S2 subunit. The resulting peplomers protrude from the virus surface as spikes. In terms of processing, specific enzymatic cleavages in vivo yield mature proteins. The precursor is processed into S1 and S2 by host cell furin or another cellular protease to yield the mature S1 and S2 proteins. Additionally, a second cleavage leads to the release of a fusion peptide after viral attachment to host cell receptor. Post-translationally, the cytoplasmic Cys-rich domain is palmitoylated. Spike glycoprotein is digested within host endosomes.

The protein resides in the virion membrane. The protein localises to the host endoplasmic reticulum-Golgi intermediate compartment membrane. Its subcellular location is the host cell membrane. Functionally, attaches the virion to the cell membrane by interacting with host receptor, initiating the infection. Its function is as follows. Mediates fusion of the virion and cellular membranes by acting as a class I viral fusion protein. Under the current model, the protein has at least three conformational states: pre-fusion native state, pre-hairpin intermediate state, and post-fusion hairpin state. During viral and target cell membrane fusion, the coiled coil regions (heptad repeats) assume a trimer-of-hairpins structure, positioning the fusion peptide in close proximity to the C-terminal region of the ectodomain. The formation of this structure appears to drive apposition and subsequent fusion of viral and target cell membranes. In terms of biological role, acts as a viral fusion peptide which is unmasked following S2 cleavage occurring upon virus endocytosis. This Bos taurus (Bovine) protein is Spike glycoprotein.